We begin with the raw amino-acid sequence, 377 residues long: Chaperone protein DnaJ (377 aa).

A J domain is found at 5-70 (DYYEVLGVGR…NKKAAYDQFG (66 aa)). Residues 133-211 (GLTKELRIPT…CHGDGRVEKT (79 aa)) form a CR-type zinc finger. Residues Cys-146, Cys-149, Cys-163, Cys-166, Cys-185, Cys-188, Cys-199, and Cys-202 each coordinate Zn(2+). CXXCXGXG motif repeat units lie at residues 146–153 (CDVCDGSG), 163–170 (CGTCHGQG), 185–192 (CPTCHGRG), and 199–206 (CSKCHGDG).

It belongs to the DnaJ family. In terms of assembly, homodimer. Zn(2+) serves as cofactor.

The protein localises to the cytoplasm. Its function is as follows. Participates actively in the response to hyperosmotic and heat shock by preventing the aggregation of stress-denatured proteins and by disaggregating proteins, also in an autonomous, DnaK-independent fashion. Unfolded proteins bind initially to DnaJ; upon interaction with the DnaJ-bound protein, DnaK hydrolyzes its bound ATP, resulting in the formation of a stable complex. GrpE releases ADP from DnaK; ATP binding to DnaK triggers the release of the substrate protein, thus completing the reaction cycle. Several rounds of ATP-dependent interactions between DnaJ, DnaK and GrpE are required for fully efficient folding. Also involved, together with DnaK and GrpE, in the DNA replication of plasmids through activation of initiation proteins. The chain is Chaperone protein DnaJ from Shewanella sp. (strain ANA-3).